We begin with the raw amino-acid sequence, 289 residues long: Probable protein phosphatase 2C 39 (289 aa).

In terms of domain architecture, PPM-type phosphatase spans Thr41–Phe288. Mn(2+)-binding residues include Asp78, Gly79, Asp240, and Asp279.

It belongs to the PP2C family. The cofactor is Mg(2+). It depends on Mn(2+) as a cofactor.

The enzyme catalyses O-phospho-L-seryl-[protein] + H2O = L-seryl-[protein] + phosphate. It carries out the reaction O-phospho-L-threonyl-[protein] + H2O = L-threonyl-[protein] + phosphate. The chain is Probable protein phosphatase 2C 39 from Arabidopsis thaliana (Mouse-ear cress).